The sequence spans 329 residues: Holliday junction branch migration complex subunit RuvB (329 aa).

Residues 1-181 (MNELLHQHKA…FGIPLHLEFY (181 aa)) are large ATPase domain (RuvB-L). ATP contacts are provided by Leu-20, Arg-21, Gly-62, Lys-65, Thr-66, Thr-67, Arg-171, Tyr-181, and Arg-218. Thr-66 provides a ligand contact to Mg(2+). The interval 182 to 252 (SVEELMLVIK…FADSALFNLG (71 aa)) is small ATPAse domain (RuvB-S). Residues 255 to 329 (KSGLDKMDIK…IEHLMNYKYI (75 aa)) are head domain (RuvB-H). Positions 308 and 313 each coordinate DNA.

It belongs to the RuvB family. In terms of assembly, homohexamer. Forms an RuvA(8)-RuvB(12)-Holliday junction (HJ) complex. HJ DNA is sandwiched between 2 RuvA tetramers; dsDNA enters through RuvA and exits via RuvB. An RuvB hexamer assembles on each DNA strand where it exits the tetramer. Each RuvB hexamer is contacted by two RuvA subunits (via domain III) on 2 adjacent RuvB subunits; this complex drives branch migration. In the full resolvosome a probable DNA-RuvA(4)-RuvB(12)-RuvC(2) complex forms which resolves the HJ.

It is found in the cytoplasm. It catalyses the reaction ATP + H2O = ADP + phosphate + H(+). In terms of biological role, the RuvA-RuvB-RuvC complex processes Holliday junction (HJ) DNA during genetic recombination and DNA repair, while the RuvA-RuvB complex plays an important role in the rescue of blocked DNA replication forks via replication fork reversal (RFR). RuvA specifically binds to HJ cruciform DNA, conferring on it an open structure. The RuvB hexamer acts as an ATP-dependent pump, pulling dsDNA into and through the RuvAB complex. RuvB forms 2 homohexamers on either side of HJ DNA bound by 1 or 2 RuvA tetramers; 4 subunits per hexamer contact DNA at a time. Coordinated motions by a converter formed by DNA-disengaged RuvB subunits stimulates ATP hydrolysis and nucleotide exchange. Immobilization of the converter enables RuvB to convert the ATP-contained energy into a lever motion, pulling 2 nucleotides of DNA out of the RuvA tetramer per ATP hydrolyzed, thus driving DNA branch migration. The RuvB motors rotate together with the DNA substrate, which together with the progressing nucleotide cycle form the mechanistic basis for DNA recombination by continuous HJ branch migration. Branch migration allows RuvC to scan DNA until it finds its consensus sequence, where it cleaves and resolves cruciform DNA. This chain is Holliday junction branch migration complex subunit RuvB, found in Anaplasma phagocytophilum (strain HZ).